A 315-amino-acid chain; its full sequence is Glutathione synthetase (315 aa).

An ATP-grasp domain is found at 125–310; that stretch reads KLYTAWFADL…ITGMLMDAIE (186 aa). 151 to 207 is an ATP binding site; sequence WEKHGDIIMKPLDGMGGASIFRVKEGDPNIGVIAETLTELGNRYCMAQNYLPAIKDG. Glutamate 281 and asparagine 283 together coordinate Mg(2+).

Belongs to the prokaryotic GSH synthase family. Requires Mg(2+) as cofactor. Mn(2+) serves as cofactor.

The catalysed reaction is gamma-L-glutamyl-L-cysteine + glycine + ATP = glutathione + ADP + phosphate + H(+). Its pathway is sulfur metabolism; glutathione biosynthesis; glutathione from L-cysteine and L-glutamate: step 2/2. This chain is Glutathione synthetase, found in Salmonella typhimurium (strain LT2 / SGSC1412 / ATCC 700720).